The primary structure comprises 491 residues: MNTQYNSSYIFSITLVATLGGLLFGYDTAVISGTVESLNTVFVAPQNLSESAANSLLGFCVASALIGCIIGGALGGYCSNRFGRRDSLKIAAVLFFISGVGSAWPELGFTSINPDNTVPVYLAGYVPEFVIYRIIGGIGVGLASMLSPMYIAELAPAHIRGKLVSFNQFAIIFGQLLVYCVNYFIARSGDASWLNTDGWRYMFASECIPALLFLMLLYTVPESPRWLMSRGKQEQAEGILRKIMGNTLATQAVQEIKHSLDHGRKTGGRLLMFGVGVIVIGVMLSIFQQFVGINVVLYYAPEVFKTLGASTDIALLQTIIVGVINLTFTVLAIMTVDKFGRKPLQIIGALGMAIGMFSLGTAFYTQAPGIVALLSMLFYVAAFAMSWGPVCWVLLSEIFPNAIRGKALAIAVAAQWLANYFVSWTFPMMDKNSWLVAHFHNGFSYWIYGCMGVLAALFMWKFVPETKGKTLEELEALWEPETKKTQQTATL.

The Cytoplasmic segment spans residues 1 to 9 (MNTQYNSSY). The chain crosses the membrane as a helical span at residues 10 to 30 (IFSITLVATLGGLLFGYDTAV). At 31-55 (ISGTVESLNTVFVAPQNLSESAANS) the chain is on the periplasmic side. A helical membrane pass occupies residues 56–76 (LLGFCVASALIGCIIGGALGG). Residues 77 to 89 (YCSNRFGRRDSLK) are Cytoplasmic-facing. The chain crosses the membrane as a helical span at residues 90 to 110 (IAAVLFFISGVGSAWPELGFT). The Periplasmic portion of the chain corresponds to 111 to 133 (SINPDNTVPVYLAGYVPEFVIYR). The helical transmembrane segment at 134–154 (IIGGIGVGLASMLSPMYIAEL) threads the bilayer. The Cytoplasmic segment spans residues 155-165 (APAHIRGKLVS). Residues 166–186 (FNQFAIIFGQLLVYCVNYFIA) form a helical membrane-spanning segment. Position 168 (Gln-168) interacts with beta-D-xylose. Residues 187 to 200 (RSGDASWLNTDGWR) are Periplasmic-facing. Residues 201-221 (YMFASECIPALLFLMLLYTVP) form a helical membrane-spanning segment. Topologically, residues 222–272 (ESPRWLMSRGKQEQAEGILRKIMGNTLATQAVQEIKHSLDHGRKTGGRLLM) are cytoplasmic. The chain crosses the membrane as a helical span at residues 273-293 (FGVGVIVIGVMLSIFQQFVGI). Residues 288–289 (QQ) and Asn-294 each bind beta-D-xylose. Residues 294 to 312 (NVVLYYAPEVFKTLGASTD) are Periplasmic-facing. Residues 313–333 (IALLQTIIVGVINLTFTVLAI) traverse the membrane as a helical segment. The Cytoplasmic portion of the chain corresponds to 334-343 (MTVDKFGRKP). Residues 344 to 364 (LQIIGALGMAIGMFSLGTAFY) traverse the membrane as a helical segment. Topologically, residues 365–369 (TQAPG) are periplasmic. Residues 370-390 (IVALLSMLFYVAAFAMSWGPV) form a helical membrane-spanning segment. Residues 391 to 407 (CWVLLSEIFPNAIRGKA) lie on the Cytoplasmic side of the membrane. Beta-D-xylose contacts are provided by Trp-392 and Gln-415. The chain crosses the membrane as a helical span at residues 408 to 428 (LAIAVAAQWLANYFVSWTFPM). At 429–442 (MDKNSWLVAHFHNG) the chain is on the periplasmic side. A helical transmembrane segment spans residues 443-463 (FSYWIYGCMGVLAALFMWKFV). Residues 464 to 491 (PETKGKTLEELEALWEPETKKTQQTATL) are Cytoplasmic-facing.

Belongs to the major facilitator superfamily. Sugar transporter (TC 2.A.1.1) family.

Its subcellular location is the cell inner membrane. It catalyses the reaction D-xylose(in) + H(+)(in) = D-xylose(out) + H(+)(out). Functionally, uptake of D-xylose across the boundary membrane with the concomitant transport of protons into the cell (symport system). This chain is D-xylose-proton symporter (xylE), found in Escherichia coli O157:H7.